Reading from the N-terminus, the 206-residue chain is Orotate phosphoribosyltransferase (206 aa).

5-phospho-alpha-D-ribose 1-diphosphate is bound by residues R97, K98, K101, and 125–133 (NDVIASGRS). R157 lines the orotate pocket.

The protein belongs to the purine/pyrimidine phosphoribosyltransferase family. PyrE subfamily. In terms of assembly, homodimer. It depends on Mg(2+) as a cofactor.

The enzyme catalyses orotidine 5'-phosphate + diphosphate = orotate + 5-phospho-alpha-D-ribose 1-diphosphate. It functions in the pathway pyrimidine metabolism; UMP biosynthesis via de novo pathway; UMP from orotate: step 1/2. In terms of biological role, catalyzes the transfer of a ribosyl phosphate group from 5-phosphoribose 1-diphosphate to orotate, leading to the formation of orotidine monophosphate (OMP). The sequence is that of Orotate phosphoribosyltransferase from Chlamydia caviae (strain ATCC VR-813 / DSM 19441 / 03DC25 / GPIC) (Chlamydophila caviae).